The primary structure comprises 2153 residues: Non-reducing polyketide synthase albA (2153 aa).

The interval 8-244 (YLFGDQTSDI…VKAPIHGPYH (237 aa)) is N-terminal acylcarrier protein transacylase domain (SAT). One can recognise a Ketosynthase family 3 (KS3) domain in the interval 375-806 (NSKIAIIGMS…GGNTALLLED (432 aa)). Residues cysteine 547, histidine 682, and histidine 724 each act as for beta-ketoacyl synthase activity in the active site. The segment at 912–1232 (FVFTGQGAQY…LASLHLAGID (321 aa)) is malonyl-CoA:ACP transacylase (MAT) domain. Serine 1001 functions as the For acyl/malonyl transferase activity in the catalytic mechanism. Residues 1286-1425 (HEYLTTAAQK…CTVRFFDCAA (140 aa)) form an N-terminal hotdog fold region. Positions 1286–1598 (HEYLTTAAQK…FQALSRKILD (313 aa)) constitute a PKS/mFAS DH domain. The product template (PT) domain stretch occupies residues 1290–1603 (TTAAQKVIET…RKILDTVLPP (314 aa)). Catalysis depends on histidine 1326, which acts as the Proton acceptor; for dehydratase activity. Positions 1452 to 1598 (DAHRLGRGMV…FQALSRKILD (147 aa)) are C-terminal hotdog fold. Aspartate 1511 serves as the catalytic Proton donor; for dehydratase activity. A disordered region spans residues 1608-1643 (KGPARPAASAQKAAPAAAASKSRASAPAPAKPAAKP). The span at 1610-1643 (PARPAASAQKAAPAAAASKSRASAPAPAKPAAKP) shows a compositional bias: low complexity. Positions 1643–1720 (PSAPSLVKRA…DFKQFLAPMS (78 aa)) constitute a Carrier 1 domain. Residue serine 1680 is modified to O-(pantetheine 4'-phosphoryl)serine. The segment at 1720-1765 (SQGEASDGSTSDPESSSSFNGGSSTDESSAGSPVSSPPNEKVTQVE) is disordered. Over residues 1725–1748 (SDGSTSDPESSSSFNGGSSTDESS) the composition is skewed to low complexity. The span at 1749 to 1765 (AGSPVSSPPNEKVTQVE) shows a compositional bias: polar residues. A Carrier 2 domain is found at 1764–1841 (VEQHATIKEI…DVEDALGLKP (78 aa)). O-(pantetheine 4'-phosphoryl)serine is present on serine 1801. A claisen cyclase domain region spans residues 1879-2151 (SPHPRSTSIL…ELGSFIGNAM (273 aa)). The For Claisen cyclase activity role is filled by serine 1969.

It catalyses the reaction 6 malonyl-CoA + acetyl-CoA + 6 H(+) = naphtopyrone YWA1 + 6 CO2 + 7 CoA + H2O. The protein operates within secondary metabolite biosynthesis. In terms of biological role, non-reducing polyketide synthase; part of the gene cluster that mediates the biosynthesis of aurasperone B, a dimeric gamma-naphthopyrone. The first step in the biosynthesis of aurasperone B is the production of gamma-naphthopyrone precursor YWA1 by the non-reducing polyketide synthase albA, via condensation of one acetyl-CoA starter unit with 6 malonyl-CoA units. YWA1 is then methylated by aunE at position C-6 to yield foncesin which is further methylated at position C-8 by aunD to produce fonsecin B. A key enzyme in the biosynthetic pathway is the cytochrome P450 monooxygenase aunB which catalyzes the oxidative dimerization of fonsecin B to aurasperone B. AunB also catalyzes the oxidative dimerization of rubrofusarin B into aurasperone A. This Aspergillus niger (strain ATCC MYA-4892 / CBS 513.88 / FGSC A1513) protein is Non-reducing polyketide synthase albA.